The chain runs to 154 residues: Deoxyuridine 5'-triphosphate nucleotidohydrolase (154 aa).

Substrate is bound by residues 64 to 66 (RSG), Asn77, 81 to 83 (TVD), and Lys91. The interval 135–154 (LADTTRGDGGHGSSGGHASL) is disordered. The span at 144-154 (GHGSSGGHASL) shows a compositional bias: gly residues.

This sequence belongs to the dUTPase family. In terms of assembly, homotrimer. Mg(2+) serves as cofactor.

It catalyses the reaction dUTP + H2O = dUMP + diphosphate + H(+). It participates in pyrimidine metabolism; dUMP biosynthesis; dUMP from dCTP (dUTP route): step 2/2. In terms of biological role, this enzyme is involved in nucleotide metabolism: it produces dUMP, the immediate precursor of thymidine nucleotides and it decreases the intracellular concentration of dUTP so that uracil cannot be incorporated into DNA. The chain is Deoxyuridine 5'-triphosphate nucleotidohydrolase from Mycolicibacterium vanbaalenii (strain DSM 7251 / JCM 13017 / BCRC 16820 / KCTC 9966 / NRRL B-24157 / PYR-1) (Mycobacterium vanbaalenii).